The sequence spans 902 residues: Proline-rich transmembrane protein 4 (902 aa).

The first 18 residues, 1–18 (MAGRGCLELGLFCWVLLA), serve as a signal peptide directing secretion. Disordered regions lie at residues 120–149 (FTPW…SQPR) and 262–337 (PPPL…SGQP). Residues 125–139 (SSLPPESTSPLSGPT) show a composition bias toward low complexity. The span at 271-301 (SSPSPLDSVASPSSASIKTTPVQHDPTVSTS) shows a compositional bias: polar residues. The next 5 membrane-spanning stretches (helical) occupy residues 371-391 (AGAL…LLPW), 393-413 (CPPG…AGTT), 431-451 (ALAW…GLGL), 465-485 (PIGL…AALG), and 501-521 (GLHA…SCWG). S642 is modified (phosphoserine). Disordered regions lie at residues 700-721 (GARA…TVDF), 771-811 (KTGA…SLCG), and 836-872 (VLSP…ASEL). A compositionally biased stretch (polar residues) spans 703–717 (ANTTQSPASSPSSDC). Positions 786-798 (SPAPPELPSPGAW) are enriched in pro residues. Low complexity-rich tracts occupy residues 799 to 811 (PPGS…SLCG) and 843 to 854 (SESSPSLPASGS).

The protein resides in the membrane. The polypeptide is Proline-rich transmembrane protein 4 (Prrt4) (Rattus norvegicus (Rat)).